The following is a 309-amino-acid chain: MTIGKILLYYCFTPIEDPTAIMLWQRSLCEKLGLKGRILISEHGINGTVGGDMDACKRYVRETREYPGFKKMEFKWSEGGAEDFPRLSVKVRDEIVAFGAPGELKVDENGVIGGGVHLKPEEVNKLVEERGEEVVFFDGRNAMEAEIGKFKNAVVPDVRTTHDFIAELESGKYDWMKDKPVVSYCTGGIRCEILSALMKNRGFNEVYQIDGGIVRYGEKYGNDGLWEGSMYVFDKRMHHEFGQGLEDPGFIQLGHCVHCGKGTNTFHNCINEDTCRKQVLICDDCIQHVETQHCGRPDCAEVAASQAQA.

The 96-residue stretch at 130 to 225 folds into the Rhodanese domain; it reads RGEEVVFFDG…YGEKYGNDGL (96 aa). Cys-185 serves as the catalytic Cysteine persulfide intermediate.

This sequence belongs to the TrhO family.

The enzyme catalyses uridine(34) in tRNA + AH2 + O2 = 5-hydroxyuridine(34) in tRNA + A + H2O. Functionally, catalyzes oxygen-dependent 5-hydroxyuridine (ho5U) modification at position 34 in tRNAs. The polypeptide is tRNA uridine(34) hydroxylase (Corynebacterium aurimucosum (strain ATCC 700975 / DSM 44827 / CIP 107346 / CN-1) (Corynebacterium nigricans)).